A 308-amino-acid polypeptide reads, in one-letter code: C-4 methylsterol oxidase (308 aa).

The helical transmembrane segment at 56–76 (LLFFLTHEIFYFGRCLPWAII) threads the bilayer. One can recognise a Fatty acid hydroxylase domain in the interval 145–282 (WAVFFVLEDT…FRWWDFILDT (138 aa)). Residues 160–164 (HRGLH) carry the Histidine box-1 motif. The Histidine box-2 motif lies at 173-177 (HKQHH). The Histidine box-3 motif lies at 257–263 (HHDEHHH).

This sequence belongs to the sterol desaturase family. Fe cation is required as a cofactor.

It is found in the endoplasmic reticulum membrane. The catalysed reaction is 4,4-dimethyl-5alpha-cholest-7-en-3beta-ol + 6 Fe(II)-[cytochrome b5] + 3 O2 + 5 H(+) = 4alpha-carboxy-4beta-methyl-5alpha-cholest-7-ene-3beta-ol + 6 Fe(III)-[cytochrome b5] + 4 H2O. It functions in the pathway steroid biosynthesis; zymosterol biosynthesis; zymosterol from lanosterol: step 3/6. In terms of biological role, C-4 methylsterol oxidase; part of the third module of ergosterol biosynthesis pathway that includes the late steps of the pathway. ERG25 is a catalytic component of the C-4 demethylation complex that catalyzes the conversion of 4,4-dimethylfecosterol into fecosterol via 4-methylfecosterol. Catalyzes the three-step monooxygenation required for the demethylation of 4,4-dimethyl and 4alpha-methylsterols. The third module or late pathway involves the ergosterol synthesis itself through consecutive reactions that mainly occur in the endoplasmic reticulum (ER) membrane. Firstly, the squalene synthase ERG9 catalyzes the condensation of 2 farnesyl pyrophosphate moieties to form squalene, which is the precursor of all steroids. Squalene synthase is crucial for balancing the incorporation of farnesyl diphosphate (FPP) into sterol and nonsterol isoprene synthesis. Secondly, the squalene epoxidase ERG1 catalyzes the stereospecific oxidation of squalene to (S)-2,3-epoxysqualene, which is considered to be a rate-limiting enzyme in steroid biosynthesis. Then, the lanosterol synthase ERG7 catalyzes the cyclization of (S)-2,3 oxidosqualene to lanosterol, a reaction that forms the sterol core. In the next steps, lanosterol is transformed to zymosterol through a complex process involving various demethylation, reduction and desaturation reactions. The lanosterol 14-alpha-demethylase ERG11 (also known as CYP51) catalyzes C14-demethylation of lanosterol to produce 4,4'-dimethyl cholesta-8,14,24-triene-3-beta-ol, which is critical for ergosterol biosynthesis. The C-14 reductase ERG24 reduces the C14=C15 double bond of 4,4-dimethyl-cholesta-8,14,24-trienol to produce 4,4-dimethyl-cholesta-8,24-dienol. 4,4-dimethyl-cholesta-8,24-dienol is substrate of the C-4 demethylation complex ERG25-ERG26-ERG27 in which ERG25 catalyzes the three-step monooxygenation required for the demethylation of 4,4-dimethyl and 4alpha-methylsterols, ERG26 catalyzes the oxidative decarboxylation that results in a reduction of the 3-beta-hydroxy group at the C-3 carbon to an oxo group, and ERG27 is responsible for the reduction of the keto group on the C-3. ERG28 has a role as a scaffold to help anchor ERG25, ERG26 and ERG27 to the endoplasmic reticulum and ERG29 regulates the activity of the iron-containing C4-methylsterol oxidase ERG25. Then, the sterol 24-C-methyltransferase ERG6 catalyzes the methyl transfer from S-adenosyl-methionine to the C-24 of zymosterol to form fecosterol. The C-8 sterol isomerase ERG2 catalyzes the reaction which results in unsaturation at C-7 in the B ring of sterols and thus converts fecosterol to episterol. The sterol-C5-desaturase ERG3 then catalyzes the introduction of a C-5 double bond in the B ring to produce 5-dehydroepisterol. The C-22 sterol desaturase ERG5 further converts 5-dehydroepisterol into ergosta-5,7,22,24(28)-tetraen-3beta-ol by forming the C-22(23) double bond in the sterol side chain. Finally, ergosta-5,7,22,24(28)-tetraen-3beta-ol is substrate of the C-24(28) sterol reductase ERG4 to produce ergosterol. The polypeptide is C-4 methylsterol oxidase (Candida albicans (strain SC5314 / ATCC MYA-2876) (Yeast)).